Here is a 281-residue protein sequence, read N- to C-terminus: Ribosomal RNA small subunit methyltransferase A (281 aa).

Residues Asn36, Leu38, Gly63, Glu84, Asp109, and Asn127 each coordinate S-adenosyl-L-methionine.

The protein belongs to the class I-like SAM-binding methyltransferase superfamily. rRNA adenine N(6)-methyltransferase family. RsmA subfamily.

It localises to the cytoplasm. It catalyses the reaction adenosine(1518)/adenosine(1519) in 16S rRNA + 4 S-adenosyl-L-methionine = N(6)-dimethyladenosine(1518)/N(6)-dimethyladenosine(1519) in 16S rRNA + 4 S-adenosyl-L-homocysteine + 4 H(+). In terms of biological role, specifically dimethylates two adjacent adenosines (A1518 and A1519) in the loop of a conserved hairpin near the 3'-end of 16S rRNA in the 30S particle. May play a critical role in biogenesis of 30S subunits. This Borreliella afzelii (strain PKo) (Borrelia afzelii) protein is Ribosomal RNA small subunit methyltransferase A.